Reading from the N-terminus, the 367-residue chain is 2-aminoethylphosphonate--pyruvate transaminase (367 aa).

K194 carries the post-translational modification N6-(pyridoxal phosphate)lysine.

It belongs to the class-V pyridoxal-phosphate-dependent aminotransferase family. PhnW subfamily. In terms of assembly, homodimer. The cofactor is pyridoxal 5'-phosphate.

It carries out the reaction (2-aminoethyl)phosphonate + pyruvate = phosphonoacetaldehyde + L-alanine. Functionally, involved in phosphonate degradation. The sequence is that of 2-aminoethylphosphonate--pyruvate transaminase from Klebsiella pneumoniae subsp. pneumoniae (strain ATCC 700721 / MGH 78578).